We begin with the raw amino-acid sequence, 318 residues long: Methionyl-tRNA formyltransferase (318 aa).

(6S)-5,6,7,8-tetrahydrofolate is bound at residue 112-115 (SILP).

This sequence belongs to the Fmt family.

It carries out the reaction L-methionyl-tRNA(fMet) + (6R)-10-formyltetrahydrofolate = N-formyl-L-methionyl-tRNA(fMet) + (6S)-5,6,7,8-tetrahydrofolate + H(+). In terms of biological role, attaches a formyl group to the free amino group of methionyl-tRNA(fMet). The formyl group appears to play a dual role in the initiator identity of N-formylmethionyl-tRNA by promoting its recognition by IF2 and preventing the misappropriation of this tRNA by the elongation apparatus. The sequence is that of Methionyl-tRNA formyltransferase from Shewanella sp. (strain W3-18-1).